A 92-amino-acid polypeptide reads, in one-letter code: Pyrimidine/purine nucleoside phosphorylase (92 aa).

The protein belongs to the nucleoside phosphorylase PpnP family.

It carries out the reaction a purine D-ribonucleoside + phosphate = a purine nucleobase + alpha-D-ribose 1-phosphate. It catalyses the reaction adenosine + phosphate = alpha-D-ribose 1-phosphate + adenine. The catalysed reaction is cytidine + phosphate = cytosine + alpha-D-ribose 1-phosphate. The enzyme catalyses guanosine + phosphate = alpha-D-ribose 1-phosphate + guanine. It carries out the reaction inosine + phosphate = alpha-D-ribose 1-phosphate + hypoxanthine. It catalyses the reaction thymidine + phosphate = 2-deoxy-alpha-D-ribose 1-phosphate + thymine. The catalysed reaction is uridine + phosphate = alpha-D-ribose 1-phosphate + uracil. The enzyme catalyses xanthosine + phosphate = alpha-D-ribose 1-phosphate + xanthine. In terms of biological role, catalyzes the phosphorolysis of diverse nucleosides, yielding D-ribose 1-phosphate and the respective free bases. Can use uridine, adenosine, guanosine, cytidine, thymidine, inosine and xanthosine as substrates. Also catalyzes the reverse reactions. This is Pyrimidine/purine nucleoside phosphorylase from Rhodopirellula baltica (strain DSM 10527 / NCIMB 13988 / SH1).